A 339-amino-acid polypeptide reads, in one-letter code: Photosystem II assembly lipoprotein Ycf48 (339 aa).

The first 22 residues, 1-22 (MVIVKSWQKIFTLLVVLLLCIG), serve as a signal peptide directing secretion. Cysteine 23 is lipidated: N-palmitoyl cysteine. Residue cysteine 23 is the site of S-diacylglycerol cysteine attachment.

It belongs to the Ycf48 family. Part of early PSII assembly complexes which includes D1 (psbA) and PsbI; not found in mature PSII. Binds to the lumenal side of PSII complexes. Interacts with YidC.

The protein localises to the cellular thylakoid membrane. Its function is as follows. A factor required for optimal assembly of photosystem II (PSII), acting in the early stages of PSII assembly. Also plays a role in replacement of photodamaged D1 (psbA). Assists YidC in synthesis of chlorophyll-binding proteins. This Nostoc sp. (strain PCC 7120 / SAG 25.82 / UTEX 2576) protein is Photosystem II assembly lipoprotein Ycf48.